The chain runs to 421 residues: 3-alpha-mycarosylerythronolide B desosaminyl transferase (421 aa).

Residues M1 to A23 form the signal peptide.

It belongs to the glycosyltransferase 28 family. Heterotetramer composed of EryCII and EryCIII.

It carries out the reaction 3-O-alpha-L-mycarosylerythronolide B + dTDP-alpha-D-desosamine = erythromycin D + dTDP + H(+). The protein operates within antibiotic biosynthesis; erythromycin biosynthesis. Catalyzes the conversion of alpha-L-mycarosylerythronolide B into erythromycin D in the erythromycin biosynthesis pathway. The sequence is that of 3-alpha-mycarosylerythronolide B desosaminyl transferase (eryCIII) from Saccharopolyspora erythraea (strain ATCC 11635 / DSM 40517 / JCM 4748 / NBRC 13426 / NCIMB 8594 / NRRL 2338).